Here is a 158-residue protein sequence, read N- to C-terminus: Snaclec stejaggregin-A subunit alpha (158 aa).

An N-terminal signal peptide occupies residues 1-23 (MGRFISVSFGLLVVFLSLSGTGA). 3 disulfides stabilise this stretch: cysteine 27–cysteine 38, cysteine 55–cysteine 152, and cysteine 127–cysteine 144. In terms of domain architecture, C-type lectin spans 34-153 (YDWYCYKPFN…CQAKNPFVCK (120 aa)).

The protein belongs to the snaclec family. Heteromultimer; disulfide-linked. As to expression, expressed by the venom gland.

The protein resides in the secreted. Its function is as follows. Interferes with one step of hemostasis (modulation of platelet aggregation, or coagulation cascade, for example). This chain is Snaclec stejaggregin-A subunit alpha, found in Trimeresurus stejnegeri (Chinese green tree viper).